Here is a 315-residue protein sequence, read N- to C-terminus: Transcription antitermination protein NusB (315 aa).

Positions 296 to 315 are disordered; the sequence is SANFDTKSAELNDADEKSQD. Positions 302-315 are enriched in basic and acidic residues; it reads KSAELNDADEKSQD.

The protein belongs to the NusB family.

Functionally, involved in transcription antitermination. Required for transcription of ribosomal RNA (rRNA) genes. Binds specifically to the boxA antiterminator sequence of the ribosomal RNA (rrn) operons. The protein is Transcription antitermination protein NusB of Psychrobacter cryohalolentis (strain ATCC BAA-1226 / DSM 17306 / VKM B-2378 / K5).